A 559-amino-acid chain; its full sequence is Glucose-6-phosphate isomerase (559 aa).

Residue glutamate 352 is the Proton donor of the active site. Residues histidine 383 and lysine 511 contribute to the active site.

This sequence belongs to the GPI family.

Its subcellular location is the cytoplasm. It carries out the reaction alpha-D-glucose 6-phosphate = beta-D-fructose 6-phosphate. Its pathway is carbohydrate biosynthesis; gluconeogenesis. It functions in the pathway carbohydrate degradation; glycolysis; D-glyceraldehyde 3-phosphate and glycerone phosphate from D-glucose: step 2/4. Catalyzes the reversible isomerization of glucose-6-phosphate to fructose-6-phosphate. The polypeptide is Glucose-6-phosphate isomerase (Chlorobaculum tepidum (strain ATCC 49652 / DSM 12025 / NBRC 103806 / TLS) (Chlorobium tepidum)).